The chain runs to 483 residues: Serine/threonine-protein kinase BSK4 (483 aa).

Residue Gly2 is the site of N-myristoyl glycine attachment. The 267-residue stretch at 56-322 (ENVVSEHGET…DTEVLSHVLM (267 aa)) folds into the Protein kinase domain. ATP-binding positions include 62 to 70 (HGETAPNVV) and Lys84. Asp178 serves as the catalytic Proton acceptor.

This sequence belongs to the protein kinase superfamily. Ser/Thr protein kinase family.

The protein localises to the cell membrane. The enzyme catalyses L-seryl-[protein] + ATP = O-phospho-L-seryl-[protein] + ADP + H(+). The catalysed reaction is L-threonyl-[protein] + ATP = O-phospho-L-threonyl-[protein] + ADP + H(+). In terms of biological role, probable serine/threonine kinase that acts as a positive regulator of brassinosteroid (BR) signaling downstream of the receptor kinase BRI1. Functions redundantly with BSK3, BSK6, BSK7 and BSK8. The sequence is that of Serine/threonine-protein kinase BSK4 from Arabidopsis thaliana (Mouse-ear cress).